The primary structure comprises 204 residues: Large ribosomal subunit protein uL4 (204 aa).

Residues 49–74 (AKKRGEVSGGGKKPWSQKGGGRARAG) form a disordered region. Residues 55–71 (VSGGGKKPWSQKGGGRA) are compositionally biased toward gly residues.

The protein belongs to the universal ribosomal protein uL4 family. Part of the 50S ribosomal subunit.

One of the primary rRNA binding proteins, this protein initially binds near the 5'-end of the 23S rRNA. It is important during the early stages of 50S assembly. It makes multiple contacts with different domains of the 23S rRNA in the assembled 50S subunit and ribosome. Its function is as follows. Forms part of the polypeptide exit tunnel. This Wolinella succinogenes (strain ATCC 29543 / DSM 1740 / CCUG 13145 / JCM 31913 / LMG 7466 / NCTC 11488 / FDC 602W) (Vibrio succinogenes) protein is Large ribosomal subunit protein uL4.